A 152-amino-acid polypeptide reads, in one-letter code: uncharacterized protein (152 aa).

The helical transmembrane segment at Ala12 to Phe34 threads the bilayer.

This sequence to B.subtilis YfjD.

It is found in the membrane. This is an uncharacterized protein from Bacillus subtilis (strain 168).